A 197-amino-acid chain; its full sequence is Imidazoleglycerol-phosphate dehydratase (197 aa).

This sequence belongs to the imidazoleglycerol-phosphate dehydratase family.

It localises to the cytoplasm. The enzyme catalyses D-erythro-1-(imidazol-4-yl)glycerol 3-phosphate = 3-(imidazol-4-yl)-2-oxopropyl phosphate + H2O. The protein operates within amino-acid biosynthesis; L-histidine biosynthesis; L-histidine from 5-phospho-alpha-D-ribose 1-diphosphate: step 6/9. The protein is Imidazoleglycerol-phosphate dehydratase of Bradyrhizobium diazoefficiens (strain JCM 10833 / BCRC 13528 / IAM 13628 / NBRC 14792 / USDA 110).